The following is a 438-amino-acid chain: Exoglucanase 3 (438 aa).

The signal sequence occupies residues 1 to 20; that stretch reads MFKFAALLALASLVPGFVQA. One can recognise a CBM1 domain in the interval 21–59; it reads QSPVWGQCGGNGWTGPTTCASGSTCVKQNDFYSQCLPNN. Cystine bridges form between C28–C45 and C39–C55. Residues 57–90 form a disordered region; that stretch reads PNNQAPPSTTTQPGTTPPATTTSGGTGPTSGAGN. A linker region spans residues 60–87; it reads QAPPSTTTQPGTTPPATTTSGGTGPTSG. Low complexity predominate over residues 61-79; the sequence is APPSTTTQPGTTPPATTTS. Residues 88–438 are catalytic; it reads AGNPYTGKTV…TLVANANPAL (351 aa). 2 disulfides stabilise this stretch: C170–C229 and C360–C407. Residue D215 is the Proton donor of the active site. D393 functions as the Nucleophile in the catalytic mechanism.

Belongs to the glycosyl hydrolase 6 (cellulase B) family.

It carries out the reaction Hydrolysis of (1-&gt;4)-beta-D-glucosidic linkages in cellulose and cellotetraose, releasing cellobiose from the non-reducing ends of the chains.. Shows enzymatic activity towards crystalline cellulose. At long reaction times. It is also able to degrade carboxymethyl cellulose and barley B-glucan. The polypeptide is Exoglucanase 3 (cel3) (Agaricus bisporus (White button mushroom)).